We begin with the raw amino-acid sequence, 65 residues long: Large ribosomal subunit protein bL35 (65 aa).

A disordered region spans residues Met1–Gln26. A compositionally biased stretch (basic residues) spans Ala10 to Gln26.

It belongs to the bacterial ribosomal protein bL35 family.

This is Large ribosomal subunit protein bL35 from Haemophilus ducreyi (strain 35000HP / ATCC 700724).